We begin with the raw amino-acid sequence, 236 residues long: MGQKINPIGLRLGINRTWDSRWYANTGEYGKLLHEDVKIREFLTEELKQAAISKIVIERPHKKCRVTIHSARPGIIIGKKGADIEKLRKKLSEMTNADTSLNIVEVRKPEVDATLIAQSIAQQLERRVAFRRAMKRAVQSAMRLGAEGIRINCSGRLGGAEIARMEWYREGRVPLHTLRADIDYGTAEAKTAYGICGVKVWVFKGEILEHDPMASERRAVEGDNQGSSSNRRRENA.

Residues 39–107 (IREFLTEELK…DTSLNIVEVR (69 aa)) enclose the KH type-2 domain. The interval 214-236 (ASERRAVEGDNQGSSSNRRRENA) is disordered.

The protein belongs to the universal ribosomal protein uS3 family. As to quaternary structure, part of the 30S ribosomal subunit. Forms a tight complex with proteins S10 and S14.

In terms of biological role, binds the lower part of the 30S subunit head. Binds mRNA in the 70S ribosome, positioning it for translation. In Brucella abortus (strain S19), this protein is Small ribosomal subunit protein uS3.